A 147-amino-acid chain; its full sequence is 3-dehydroquinate dehydratase (147 aa).

The active-site Proton acceptor is the tyrosine 23. Substrate is bound by residues asparagine 74, histidine 80, and aspartate 87. Histidine 100 serves as the catalytic Proton donor. Residues 101–102 (LS) and arginine 111 contribute to the substrate site.

This sequence belongs to the type-II 3-dehydroquinase family. As to quaternary structure, homododecamer.

It catalyses the reaction 3-dehydroquinate = 3-dehydroshikimate + H2O. Its pathway is metabolic intermediate biosynthesis; chorismate biosynthesis; chorismate from D-erythrose 4-phosphate and phosphoenolpyruvate: step 3/7. Catalyzes a trans-dehydration via an enolate intermediate. This is 3-dehydroquinate dehydratase from Clostridium botulinum (strain Loch Maree / Type A3).